The chain runs to 374 residues: Chaperone protein DnaJ (374 aa).

One can recognise a J domain in the interval 6 to 71; the sequence is DYYAVLEVTR…QKRAAYDRFG (66 aa). The segment at 130–209 adopts a CR-type zinc-finger fold; that stretch reads GVKKPITVPT…CHGAGTVERE (80 aa). Zn(2+)-binding residues include cysteine 143, cysteine 146, cysteine 161, cysteine 164, cysteine 183, cysteine 186, cysteine 197, and cysteine 200. CXXCXGXG motif repeat units lie at residues 143–150, 161–168, 183–190, and 197–204; these read CESCEGTG, CPTCHGAG, and CAACHGAG.

This sequence belongs to the DnaJ family. As to quaternary structure, homodimer. Requires Zn(2+) as cofactor.

The protein resides in the cytoplasm. Functionally, participates actively in the response to hyperosmotic and heat shock by preventing the aggregation of stress-denatured proteins and by disaggregating proteins, also in an autonomous, DnaK-independent fashion. Unfolded proteins bind initially to DnaJ; upon interaction with the DnaJ-bound protein, DnaK hydrolyzes its bound ATP, resulting in the formation of a stable complex. GrpE releases ADP from DnaK; ATP binding to DnaK triggers the release of the substrate protein, thus completing the reaction cycle. Several rounds of ATP-dependent interactions between DnaJ, DnaK and GrpE are required for fully efficient folding. Also involved, together with DnaK and GrpE, in the DNA replication of plasmids through activation of initiation proteins. This Gluconacetobacter diazotrophicus (strain ATCC 49037 / DSM 5601 / CCUG 37298 / CIP 103539 / LMG 7603 / PAl5) protein is Chaperone protein DnaJ.